A 564-amino-acid polypeptide reads, in one-letter code: Bifunctional sesquiterpene synthase 1 (564 aa).

Residues aspartate 317, aspartate 321, aspartate 461, and glutamate 469 each coordinate Mg(2+). A DDXXD motif motif is present at residues 317 to 321 (DDTFD).

It belongs to the terpene synthase family. The cofactor is Mg(2+).

The catalysed reaction is (2E,6E)-farnesyl diphosphate = alpha-copaene + diphosphate. It catalyses the reaction (2E,6E)-farnesyl diphosphate = delta-cadinene + diphosphate. It participates in secondary metabolite biosynthesis; terpenoid biosynthesis. Its function is as follows. Sesquiterpene synthase converting farnesyl diphosphate to alpha copaene and delta-cadinene as the major products. This is Bifunctional sesquiterpene synthase 1 from Phyla dulcis (Aztec sweet herb).